Consider the following 152-residue polypeptide: Transcription elongation factor Spt5 (152 aa).

One can recognise a KOW domain in the interval 98–127; that stretch reads EGDLVEVVSGPFRGMQAQVVKVTEGKGEVV.

This sequence belongs to the archaeal Spt5 family. Heterodimer composed of Spt4 and Spt5. Interacts with RNA polymerase (RNAP).

In terms of biological role, stimulates transcription elongation. This Acidianus ambivalens (Desulfurolobus ambivalens) protein is Transcription elongation factor Spt5.